Here is a 712-residue protein sequence, read N- to C-terminus: Lactoperoxidase (712 aa).

Positions 1–21 are cleaved as a signal peptide; sequence MLVCLHLQVFLASVALFEVAA. The propeptide occupies 22-117; the sequence is SDTIAQAAST…TDPSLDLTAL (96 aa). A glycan (N-linked (GlcNAc...) (complex) asparagine; alternate) is linked at Asn-106. An N-linked (GlcNAc...) (hybrid) asparagine; alternate glycan is attached at Asn-106. 4 disulfide bridges follow: Cys-123–Cys-284, Cys-132–Cys-145, Cys-246–Cys-256, and Cys-250–Cys-274. Residue Asn-212 is glycosylated (N-linked (GlcNAc...) (complex) asparagine; alternate). Residue Asn-212 is glycosylated (N-linked (GlcNAc...) (hybrid) asparagine; alternate). Asp-225 serves as a coordination point for heme b. His-226 functions as the Proton acceptor in the catalytic mechanism. Asp-227 contacts Ca(2+). Thr-301, Phe-303, Asp-305, and Ser-307 together coordinate Ca(2+). At Ser-315 the chain carries Phosphoserine. Residue Asn-322 is glycosylated (N-linked (GlcNAc...) (high mannose) asparagine). Residues Cys-354 and Cys-365 are joined by a disulfide bond. An N-linked (GlcNAc...) asparagine glycan is attached at Asn-358. Glu-375 provides a ligand contact to heme b. The N-linked (GlcNAc...) (complex) asparagine; alternate glycan is linked to Asn-449. Asn-449 carries N-linked (GlcNAc...) (hybrid) asparagine; alternate glycosylation. An N-linked (GlcNAc...) (high mannose) asparagine; alternate glycan is attached at Asn-449. A heme b-binding site is contributed by His-468. Position 482 is a 3'-nitrotyrosine (Tyr-482). 2 cysteine pairs are disulfide-bonded: Cys-573–Cys-630 and Cys-671–Cys-696.

The protein belongs to the peroxidase family. XPO subfamily. The cofactor is Ca(2+). Heme b is required as a cofactor. Mammary gland; milk.

It localises to the secreted. It is found in the cytoplasm. The catalysed reaction is 2 a phenolic donor + H2O2 = 2 a phenolic radical donor + 2 H2O. It carries out the reaction thiocyanate + H2O2 + H(+) = hypothiocyanous acid + H2O. The enzyme catalyses iodide + H2O2 = hypoiodite + H2O. Its activity is regulated as follows. Inhibited by small molecule methimazole (MMZ). Heme-containing oxidoreductase which catalyzes the conversion of thiocyanate (SCN(-)) into antimicrobial agent hypothiocyanous acid (OSCN(-)) in the presence of hydrogen peroxide (H2O2). Also involved in the conversion of iodide (I(-)) into hypoiodite (IO(-)) in the presence of H2O2. Responsible for the inactivation of a wide range of micro-organisms and hence, important component of defense mechanism. Shows antibacterial properties against several Gram-positive bacteria including some Staphylococcus species and Gram-negative bacteria including E.coli, P.aeruginosa and some Salmonella species. Inhibits the growth of several fungi including A.niger, Trichoderma species, C.cassicola, P.meadii and C.salmonicolor. Does not have anti-fungal activity towards C.albicans and Pythium species. May protect the udder from infection and may promote growth in newborns. May be implicated in airway host defense against infection. May contribute to maintaining an appropriate H2O2 cellular level, therefore protecting cells from H2O2-caused injuries and inflammation. This chain is Lactoperoxidase (LPO), found in Capra hircus (Goat).